The sequence spans 147 residues: Methylglyoxal synthase (147 aa).

Residues 4–147 (VSVPATKRIA…LLNFELLCES (144 aa)) form the MGS-like domain. Substrate contacts are provided by residues histidine 17, lysine 21, 43–46 (TGTT), and 63–64 (SG). Aspartate 69 (proton donor/acceptor) is an active-site residue. Histidine 96 lines the substrate pocket.

It belongs to the methylglyoxal synthase family.

It catalyses the reaction dihydroxyacetone phosphate = methylglyoxal + phosphate. Its function is as follows. Catalyzes the formation of methylglyoxal from dihydroxyacetone phosphate. The protein is Methylglyoxal synthase of Leptospira borgpetersenii serovar Hardjo-bovis (strain JB197).